The following is a 608-amino-acid chain: Elongation factor 4 (608 aa).

A tr-type G domain is found at 11–193; the sequence is DHIRNFSIVA…AIVNRLPPPK (183 aa). Residues 23–28 and 140–143 contribute to the GTP site; these read DHGKST and NKID.

Belongs to the TRAFAC class translation factor GTPase superfamily. Classic translation factor GTPase family. LepA subfamily.

It is found in the cell inner membrane. The enzyme catalyses GTP + H2O = GDP + phosphate + H(+). Functionally, required for accurate and efficient protein synthesis under certain stress conditions. May act as a fidelity factor of the translation reaction, by catalyzing a one-codon backward translocation of tRNAs on improperly translocated ribosomes. Back-translocation proceeds from a post-translocation (POST) complex to a pre-translocation (PRE) complex, thus giving elongation factor G a second chance to translocate the tRNAs correctly. Binds to ribosomes in a GTP-dependent manner. The chain is Elongation factor 4 from Agrobacterium fabrum (strain C58 / ATCC 33970) (Agrobacterium tumefaciens (strain C58)).